A 272-amino-acid chain; its full sequence is ATP phosphoribosyltransferase regulatory subunit (272 aa).

It belongs to the class-II aminoacyl-tRNA synthetase family. HisZ subfamily. In terms of assembly, heteromultimer composed of HisG and HisZ subunits.

It is found in the cytoplasm. It functions in the pathway amino-acid biosynthesis; L-histidine biosynthesis; L-histidine from 5-phospho-alpha-D-ribose 1-diphosphate: step 1/9. In terms of biological role, required for the first step of histidine biosynthesis. May allow the feedback regulation of ATP phosphoribosyltransferase activity by histidine. The protein is ATP phosphoribosyltransferase regulatory subunit of Staphylococcus aureus (strain bovine RF122 / ET3-1).